The chain runs to 1027 residues: Pro-apoptotic serine protease nma111 (1027 aa).

Positions 1–46 (MDLNGDAGAKRKRSSIVPAERPAKHLKPESSALTPGDSTPANGTVY) are disordered. The segment covering 31 to 42 (SALTPGDSTPAN) has biased composition (polar residues). Positions 81–265 (VVSIHFCQTC…AATDYFLPLD (185 aa)) are serine protease. Residues His-119, Asp-150, and Ser-232 each act as charge relay system in the active site. 2 consecutive PDZ domains span residues 288 to 373 (QWIL…LLVQ) and 875 to 956 (VFCG…VTFD). The interval 991-1027 (HNKSKHKDGIAPDAANLNPDAMEQGYDGASDIEPEAE) is disordered.

The protein belongs to the peptidase S1C family.

The protein resides in the nucleus. Its function is as follows. Nuclear serine protease which mediates apoptosis. The polypeptide is Pro-apoptotic serine protease nma111 (nma111) (Aspergillus oryzae (strain ATCC 42149 / RIB 40) (Yellow koji mold)).